The chain runs to 452 residues: MKASAVTAALAVGASTVLAAPSIKARDDVTPITVKGNAFFKGDERFYIRGVDYQPGGSSDLADPIADADGCKRDIAKFKELGLNTIRVYSVDNSKNHDECMNALADAGIYLVLDVNTPKYSINRAKPKESYNDVYLQYIFATVDAFAGYKNTLAFFSGNEVINDGPSSSAAPYVKAVTRDLRQYIRSRKYREIPVGYSAADIDTNRLQMAQYMNCGSDDERSDFFAFNDYSWCDPSSFKTSGWDQKVKNFTGYGLPLFLSEYGCNTNKRQFQEVSSLYSTDMTGVYSGGLVYEYSQEASNYGLVEISGNNVKELPDFDALKTAFEKTSNPSGDGNYNKTGGANPCPAKDAPNWDVDNDALPAIPEPAKKYMTEGAGKGPGFAGPGSQDRGTQSTATAEPGSGSATGSSSSGTSTSSKGAAAGLTVPSLTMAPVVVGAVTLLSTVFGAGLVLL.

Residues 1–19 (MKASAVTAALAVGASTVLA) form the signal peptide. A disulfide bridge links cysteine 71 with cysteine 100. (1,3-beta-D-glucosyl)n is bound by residues tyrosine 89, asparagine 159, glutamate 160, aspartate 201, and arginine 206. Residue glutamate 160 is the Proton donor of the active site. Disulfide bonds link cysteine 215-cysteine 345 and cysteine 233-cysteine 264. A glycan (N-linked (GlcNAc...) asparagine) is linked at asparagine 249. The active-site Nucleophile is the glutamate 261. Tyrosine 292 lines the (1,3-beta-D-glucosyl)n pocket. The span at 325–340 (EKTSNPSGDGNYNKTG) shows a compositional bias: polar residues. A disordered region spans residues 325 to 419 (EKTSNPSGDG…SGTSTSSKGA (95 aa)). Residue asparagine 337 is glycosylated (N-linked (GlcNAc...) asparagine). Residues 393-419 (STATAEPGSGSATGSSSSGTSTSSKGA) show a composition bias toward low complexity. Alanine 419 carries GPI-like-anchor amidated alanine lipidation. A propeptide spans 420–452 (AAGLTVPSLTMAPVVVGAVTLLSTVFGAGLVLL) (removed in mature form).

Belongs to the glycosyl hydrolase 72 family. The GPI-like anchor contains a phosphoceramide lipid group. The anchor position has not been determined.

It is found in the cell membrane. Functionally, splits internally a 1,3-beta-glucan molecule and transfers the newly generated reducing end (the donor) to the non-reducing end of another 1,3-beta-glucan molecule (the acceptor) forming a 1,3-beta linkage, resulting in the elongation of 1,3-beta-glucan chains in the cell wall. Involved in cell wall morphogenesis. This Aspergillus fumigatus (strain CBS 144.89 / FGSC A1163 / CEA10) (Neosartorya fumigata) protein is 1,3-beta-glucanosyltransferase gel1 (gel1).